A 486-amino-acid chain; its full sequence is 23S rRNA (uracil(1939)-C(5))-methyltransferase RlmD (486 aa).

One can recognise a TRAM domain in the interval 14-76; it reads AAQDGSGLPE…NHWEQANLTA (63 aa). [4Fe-4S] cluster contacts are provided by Cys-89, Cys-99, Cys-102, and Cys-181. The S-adenosyl-L-methionine site is built by Gln-289, Phe-318, Asn-323, Glu-339, Asn-374, and Asp-395. Cys-442 (nucleophile) is an active-site residue.

It belongs to the class I-like SAM-binding methyltransferase superfamily. RNA M5U methyltransferase family. RlmD subfamily.

It catalyses the reaction uridine(1939) in 23S rRNA + S-adenosyl-L-methionine = 5-methyluridine(1939) in 23S rRNA + S-adenosyl-L-homocysteine + H(+). Functionally, catalyzes the formation of 5-methyl-uridine at position 1939 (m5U1939) in 23S rRNA. In Verminephrobacter eiseniae (strain EF01-2), this protein is 23S rRNA (uracil(1939)-C(5))-methyltransferase RlmD.